Here is a 1312-residue protein sequence, read N- to C-terminus: Kinesin-like protein KIF16B (1312 aa).

Positions Ser-3–Ile-358 constitute a Kinesin motor domain. Gly-102 to Ser-109 is an ATP binding site. Residues Glu-366 to Lys-425 adopt a coiled-coil conformation. Ser-398 carries the phosphoserine modification. An FHA domain is found at Val-480–Gly-544. Position 577 is a phosphothreonine (Thr-577). A phosphoserine mark is found at Ser-582, Ser-838, Ser-1047, and Ser-1145. Coiled-coil stretches lie at residues Lys-835 to His-913 and Gln-941 to Ile-1073. The PX domain maps to Asp-1177–Thr-1291.

This sequence belongs to the TRAFAC class myosin-kinesin ATPase superfamily. Kinesin family. In terms of assembly, interacts with PTPN21. Interacts with RAB14.

Its subcellular location is the cytoplasm. The protein localises to the cytoskeleton. It is found in the early endosome membrane. The protein resides in the spindle. Plus end-directed microtubule-dependent motor protein involved in endosome transport and receptor recycling and degradation. Regulates the plus end motility of early endosomes and the balance between recycling and degradation of receptors such as EGF receptor (EGFR) and FGF receptor (FGFR). Regulates the Golgi to endosome transport of FGFR-containing vesicles during early development, a key process for developing basement membrane and epiblast and primitive endoderm lineages during early postimplantation development. The protein is Kinesin-like protein KIF16B (Kif16b) of Mus musculus (Mouse).